The sequence spans 188 residues: Crossover junction endodeoxyribonuclease RuvC (188 aa).

Active-site residues include Asp-14, Glu-74, and Asp-149. Asp-14, Glu-74, and Asp-149 together coordinate Mg(2+).

It belongs to the RuvC family. As to quaternary structure, homodimer which binds Holliday junction (HJ) DNA. The HJ becomes 2-fold symmetrical on binding to RuvC with unstacked arms; it has a different conformation from HJ DNA in complex with RuvA. In the full resolvosome a probable DNA-RuvA(4)-RuvB(12)-RuvC(2) complex forms which resolves the HJ. The cofactor is Mg(2+).

The protein localises to the cytoplasm. The catalysed reaction is Endonucleolytic cleavage at a junction such as a reciprocal single-stranded crossover between two homologous DNA duplexes (Holliday junction).. In terms of biological role, the RuvA-RuvB-RuvC complex processes Holliday junction (HJ) DNA during genetic recombination and DNA repair. Endonuclease that resolves HJ intermediates. Cleaves cruciform DNA by making single-stranded nicks across the HJ at symmetrical positions within the homologous arms, yielding a 5'-phosphate and a 3'-hydroxyl group; requires a central core of homology in the junction. The consensus cleavage sequence is 5'-(A/T)TT(C/G)-3'. Cleavage occurs on the 3'-side of the TT dinucleotide at the point of strand exchange. HJ branch migration catalyzed by RuvA-RuvB allows RuvC to scan DNA until it finds its consensus sequence, where it cleaves and resolves the cruciform DNA. The chain is Crossover junction endodeoxyribonuclease RuvC from Bacteroides fragilis (strain ATCC 25285 / DSM 2151 / CCUG 4856 / JCM 11019 / LMG 10263 / NCTC 9343 / Onslow / VPI 2553 / EN-2).